A 118-amino-acid polypeptide reads, in one-letter code: Large ribosomal subunit protein bL19 (118 aa).

The protein belongs to the bacterial ribosomal protein bL19 family.

This protein is located at the 30S-50S ribosomal subunit interface and may play a role in the structure and function of the aminoacyl-tRNA binding site. The polypeptide is Large ribosomal subunit protein bL19 (Geobacter sulfurreducens (strain ATCC 51573 / DSM 12127 / PCA)).